A 425-amino-acid chain; its full sequence is Enolase (425 aa).

A (2R)-2-phosphoglycerate-binding site is contributed by Q163. Catalysis depends on E205, which acts as the Proton donor. Mg(2+) is bound by residues D242, E285, and D312. 4 residues coordinate (2R)-2-phosphoglycerate: K337, R366, S367, and K388. The Proton acceptor role is filled by K337.

Belongs to the enolase family. It depends on Mg(2+) as a cofactor.

The protein resides in the cytoplasm. It is found in the secreted. The protein localises to the cell surface. The enzyme catalyses (2R)-2-phosphoglycerate = phosphoenolpyruvate + H2O. The protein operates within carbohydrate degradation; glycolysis; pyruvate from D-glyceraldehyde 3-phosphate: step 4/5. Its function is as follows. Catalyzes the reversible conversion of 2-phosphoglycerate (2-PG) into phosphoenolpyruvate (PEP). It is essential for the degradation of carbohydrates via glycolysis. The polypeptide is Enolase (Paracoccus denitrificans (strain Pd 1222)).